The primary structure comprises 178 residues: MSGGKYVDSEGHLYTVPIREQGNIYKPNNKAMAEEVNEKQVYDAHTKEIDLVNRDPKHLNDDVVKIDFEDVIAEPEGTHSFDGIWKASFTTFTVTKYWFYRLLSALFGIPMALIWGIYFAILSFLHIWAVVPCIKSFLIEIQCISRVYSIYVHTFCDPLFEAIGKIFSNIRINMQKEI.

S2 carries the post-translational modification N-acetylserine. S2 is modified (phosphoserine). The tract at residues 2–94 (SGGKYVDSEG…WKASFTTFTV (93 aa)) is required for homooligomerization. Topologically, residues 2–104 (SGGKYVDSEG…TKYWFYRLLS (103 aa)) are cytoplasmic. N6-acetyllysine; alternate is present on K5. A Glycyl lysine isopeptide (Lys-Gly) (interchain with G-Cter in ubiquitin); alternate cross-link involves residue K5. Phosphotyrosine is present on Y6. The residue at position 9 (S9) is a Phosphoserine. Y14 carries the post-translational modification Phosphotyrosine; by ABL1. Residue Y25 is modified to Phosphotyrosine. Glycyl lysine isopeptide (Lys-Gly) (interchain with G-Cter in ubiquitin) cross-links involve residues K26, K30, K39, K47, and K57. The interval 82 to 94 (DGIWKASFTTFTV) is interaction with CAVIN3. Positions 105–125 (ALFGIPMALIWGIYFAILSFL) form an intramembrane region, helical. Residues 126 to 178 (HIWAVVPCIKSFLIEIQCISRVYSIYVHTFCDPLFEAIGKIFSNIRINMQKEI) are Cytoplasmic-facing. An interacts with SPRY1, SPRY2, SPRY3 and SPRY4 region spans residues 131-142 (VPCIKSFLIEIQ). Residues C133, C143, and C156 are each lipidated (S-palmitoyl cysteine). Residues 149 to 160 (SIYVHTFCDPLF) are interacts with SPRY1, SPRY2, and SPRY4. Residues 167–178 (FSNIRINMQKEI) form an interacts with SPRY1, SPRY2, SPRY3 and SPRY4 region.

This sequence belongs to the caveolin family. As to quaternary structure, homooligomer. Interacts (via the N-terminus) with DPP4; the interaction is direct. Forms a stable heterooligomeric complex with CAV2 that targets to lipid rafts and drives caveolae formation. Interacts with PACSIN2; this interaction induces membrane tubulation. Interacts with BMX, BTK, CTNNB1, CDH1, GLIPR2, JUP, NOSTRIN, SNAP25 and STX1A. Interacts with SLC7A9. Interacts with TGFBR1. Interacts with CAVIN3 (via leucine-zipper domain) in a cholesterol-sensitive manner. Interacts with CAVIN1. Interacts with EHD2 in a cholesterol-dependent manner. Forms a ternary complex with UBXN6 and VCP; mediates CAV1 targeting to lysosomes for degradation. Interacts with ABCG1; this interaction regulates ABCG1-mediated cholesterol efflux. Interacts with NEU3; this interaction enhances NEU3 sialidase activity within caveola. Interacts (via C-terminus) with SPRY1, SPRY2 (via C-terminus), SPRY3, and SPRY4. Phosphorylated at Tyr-14 by ABL1 in response to oxidative stress. In terms of processing, ubiquitinated. Undergo monoubiquitination and multi- and/or polyubiquitination. Monoubiquitination of N-terminal lysines promotes integration in a ternary complex with UBXN6 and VCP which promotes oligomeric CAV1 targeting to lysosomes for degradation. Ubiquitinated by ZNRF1; leading to degradation and modulation of the TLR4-mediated immune response.

It localises to the golgi apparatus membrane. It is found in the cell membrane. The protein resides in the membrane. The protein localises to the caveola. Its subcellular location is the membrane raft. Functionally, may act as a scaffolding protein within caveolar membranes. Forms a stable heterooligomeric complex with CAV2 that targets to lipid rafts and drives caveolae formation. Mediates the recruitment of CAVIN proteins (CAVIN1/2/3/4) to the caveolae. Interacts directly with G-protein alpha subunits and can functionally regulate their activity. Involved in the costimulatory signal essential for T-cell receptor (TCR)-mediated T-cell activation. Its binding to DPP4 induces T-cell proliferation and NF-kappa-B activation in a T-cell receptor/CD3-dependent manner. Recruits CTNNB1 to caveolar membranes and may regulate CTNNB1-mediated signaling through the Wnt pathway. Negatively regulates TGFB1-mediated activation of SMAD2/3 by mediating the internalization of TGFBR1 from membrane rafts leading to its subsequent degradation. Binds 20(S)-hydroxycholesterol (20(S)-OHC). The sequence is that of Caveolin-1 (CAV1) from Otolemur garnettii (Small-eared galago).